A 178-amino-acid chain; its full sequence is ATP synthase subunit delta (178 aa).

Belongs to the ATPase delta chain family. In terms of assembly, F-type ATPases have 2 components, F(1) - the catalytic core - and F(0) - the membrane proton channel. F(1) has five subunits: alpha(3), beta(3), gamma(1), delta(1), epsilon(1). F(0) has three main subunits: a(1), b(2) and c(10-14). The alpha and beta chains form an alternating ring which encloses part of the gamma chain. F(1) is attached to F(0) by a central stalk formed by the gamma and epsilon chains, while a peripheral stalk is formed by the delta and b chains.

The protein localises to the cell inner membrane. Functionally, f(1)F(0) ATP synthase produces ATP from ADP in the presence of a proton or sodium gradient. F-type ATPases consist of two structural domains, F(1) containing the extramembraneous catalytic core and F(0) containing the membrane proton channel, linked together by a central stalk and a peripheral stalk. During catalysis, ATP synthesis in the catalytic domain of F(1) is coupled via a rotary mechanism of the central stalk subunits to proton translocation. In terms of biological role, this protein is part of the stalk that links CF(0) to CF(1). It either transmits conformational changes from CF(0) to CF(1) or is implicated in proton conduction. In Marinomonas sp. (strain MWYL1), this protein is ATP synthase subunit delta.